Consider the following 66-residue polypeptide: uncharacterized protein (66 aa).

This is an uncharacterized protein from Chlamydia pneumoniae (Chlamydophila pneumoniae).